The primary structure comprises 483 residues: Cytochrome P450 71A23 (483 aa).

The chain crosses the membrane as a helical span at residues 1-21 (MILFLCLIILFIITILFFKKH). A heme-binding site is contributed by C429.

It belongs to the cytochrome P450 family. Heme is required as a cofactor.

It localises to the membrane. The protein is Cytochrome P450 71A23 (CYP71A23) of Arabidopsis thaliana (Mouse-ear cress).